The following is a 453-amino-acid chain: Ribulose bisphosphate carboxylase large chain (453 aa).

Residues 1–2 (MS) constitute a propeptide that is removed on maturation. Residue proline 3 is modified to N-acetylproline. Residue lysine 14 is modified to N6,N6,N6-trimethyllysine. 2 residues coordinate substrate: asparagine 123 and threonine 173. Lysine 175 functions as the Proton acceptor in the catalytic mechanism. Lysine 177 is a substrate binding site. 3 residues coordinate Mg(2+): lysine 201, aspartate 203, and glutamate 204. N6-carboxylysine is present on lysine 201. The Proton acceptor role is filled by histidine 294. Substrate contacts are provided by arginine 295, histidine 327, and serine 379.

Belongs to the RuBisCO large chain family. Type I subfamily. Heterohexadecamer of 8 large chains and 8 small chains; disulfide-linked. The disulfide link is formed within the large subunit homodimers. Requires Mg(2+) as cofactor. The disulfide bond which can form in the large chain dimeric partners within the hexadecamer appears to be associated with oxidative stress and protein turnover.

The protein localises to the plastid. Its subcellular location is the chloroplast. It catalyses the reaction 2 (2R)-3-phosphoglycerate + 2 H(+) = D-ribulose 1,5-bisphosphate + CO2 + H2O. The enzyme catalyses D-ribulose 1,5-bisphosphate + O2 = 2-phosphoglycolate + (2R)-3-phosphoglycerate + 2 H(+). RuBisCO catalyzes two reactions: the carboxylation of D-ribulose 1,5-bisphosphate, the primary event in carbon dioxide fixation, as well as the oxidative fragmentation of the pentose substrate in the photorespiration process. Both reactions occur simultaneously and in competition at the same active site. This Asperula laevigata (Smooth woodruff) protein is Ribulose bisphosphate carboxylase large chain.